The following is a 1013-amino-acid chain: Putative helicase mov-10-B.1 (1013 aa).

Polar residues-rich tracts occupy residues 91 to 103 (QWSRPYRSQQNHA) and 113 to 123 (RPSTTRVSDPS). The interval 91–129 (QWSRPYRSQQNHATPHLNDAISRPSTTRVSDPSSVPEPE) is disordered. ATP is bound at residue 550–557 (GPPGTGKT). The short motif at 672–675 (DEAG) is the DEAG box element.

This sequence belongs to the DNA2/NAM7 helicase family. SDE3 subfamily.

It is found in the cytoplasm. The protein localises to the P-body. The enzyme catalyses ATP + H2O = ADP + phosphate + H(+). Functionally, probable RNA helicase. Required for RNA-mediated gene silencing by the RNA-induced silencing complex (RISC). Required for both miRNA-mediated translational repression and miRNA-mediated cleavage of complementary mRNAs by RISC. The sequence is that of Putative helicase mov-10-B.1 (mov10b.1) from Danio rerio (Zebrafish).